A 207-amino-acid polypeptide reads, in one-letter code: Dephospho-CoA kinase (207 aa).

The DPCK domain occupies 10-207; that stretch reads ILGLTGGIGS…FYLTLKGGQP (198 aa). Residue 18–23 participates in ATP binding; that stretch reads GSGKSA.

This sequence belongs to the CoaE family.

The protein resides in the cytoplasm. It catalyses the reaction 3'-dephospho-CoA + ATP = ADP + CoA + H(+). It functions in the pathway cofactor biosynthesis; coenzyme A biosynthesis; CoA from (R)-pantothenate: step 5/5. In terms of biological role, catalyzes the phosphorylation of the 3'-hydroxyl group of dephosphocoenzyme A to form coenzyme A. The polypeptide is Dephospho-CoA kinase (Pseudomonas putida (strain ATCC 47054 / DSM 6125 / CFBP 8728 / NCIMB 11950 / KT2440)).